A 145-amino-acid chain; its full sequence is Large ribosomal subunit protein uL11 (145 aa).

This sequence belongs to the universal ribosomal protein uL11 family. As to quaternary structure, part of the ribosomal stalk of the 50S ribosomal subunit. Interacts with L10 and the large rRNA to form the base of the stalk. L10 forms an elongated spine to which L12 dimers bind in a sequential fashion forming a multimeric L10(L12)X complex. One or more lysine residues are methylated.

In terms of biological role, forms part of the ribosomal stalk which helps the ribosome interact with GTP-bound translation factors. The sequence is that of Large ribosomal subunit protein uL11 from Rickettsia canadensis (strain McKiel).